The chain runs to 407 residues: 12S rRNA N(4)-cytidine methyltransferase METTL15 (407 aa).

Residues 44–63 (EAQEETDQTGIQELHRSQDR) form a disordered region. S-adenosyl-L-methionine is bound by residues 100-102 (GGH), Asp-119, Phe-146, Asp-169, and Gln-176. Ser-358 is modified (phosphoserine). Residues 386-407 (EDEDVQDNPRGRSAKLRAAIKL) form a disordered region. The segment covering 397 to 407 (RSAKLRAAIKL) has biased composition (basic residues).

The protein belongs to the methyltransferase superfamily. RsmH family.

The protein resides in the mitochondrion matrix. It carries out the reaction cytidine(839) in 12S rRNA + S-adenosyl-L-methionine = N(4)-methylcytidine(839) in 12S rRNA + S-adenosyl-L-homocysteine + H(+). N4-methylcytidine (m4C) methyltransferase responsible for the methylation of position C839 in mitochondrial 12S rRNA. Involved in the stabilization of 12S rRNA folding, therefore facilitating the assembly of the mitochondrial small ribosomal subunits. This chain is 12S rRNA N(4)-cytidine methyltransferase METTL15 (METTL15), found in Bos taurus (Bovine).